Here is a 122-residue protein sequence, read N- to C-terminus: Large ribosomal subunit protein uL14 (122 aa).

Belongs to the universal ribosomal protein uL14 family. As to quaternary structure, part of the 50S ribosomal subunit. Forms a cluster with proteins L3 and L19. In the 70S ribosome, L14 and L19 interact and together make contacts with the 16S rRNA in bridges B5 and B8.

Its function is as follows. Binds to 23S rRNA. Forms part of two intersubunit bridges in the 70S ribosome. In Caldanaerobacter subterraneus subsp. tengcongensis (strain DSM 15242 / JCM 11007 / NBRC 100824 / MB4) (Thermoanaerobacter tengcongensis), this protein is Large ribosomal subunit protein uL14.